Reading from the N-terminus, the 622-residue chain is Kinesin-like protein KIFC1 (622 aa).

Positions 1 to 88 (MKEALEPAKK…KRPGKRPDWD (88 aa)) are disordered. Residues 32–41 (SSLSQPQGPT) show a composition bias toward polar residues. Positions 95-264 (DLTEELKCYR…QELKGNIRVF (170 aa)) form a coiled coil. The Kinesin motor domain maps to 260 to 612 (NIRVFCRVRP…LRFASKVNQC (353 aa)). The tract at residues 279 to 323 (PGFLLFPHGPAGPSDPPTRLSLSRSDDRRSTLTRAPAPTTRHDFS) is disordered. Threonine 309 carries the post-translational modification Phosphothreonine. Position 360–367 (360–367 (GQTGSGKT)) interacts with ATP.

It belongs to the TRAFAC class myosin-kinesin ATPase superfamily. Kinesin family. NCD subfamily. In terms of assembly, binds NUBP1 and NUBP2. Interacts with PPP1R42.

The protein resides in the nucleus. Its subcellular location is the cytoplasm. It localises to the cytoskeleton. It is found in the microtubule organizing center. The protein localises to the centrosome. The protein resides in the spindle. Its subcellular location is the early endosome. In terms of biological role, minus end-directed microtubule-dependent motor required for bipolar spindle formation. May contribute to movement of early endocytic vesicles. Regulates cilium formation and structure. This is Kinesin-like protein KIFC1 from Cricetulus griseus (Chinese hamster).